The sequence spans 126 residues: Chemocyanin (126 aa).

The signal sequence occupies residues 1 to 30; that stretch reads MAQGSGSAERALVLGVVLVFLVFNCEVAES. Positions 31–126 constitute a Phytocyanin domain; sequence VVYTVGDGGG…GGLKIAVTAA (96 aa). Cu cation contacts are provided by His-69, Cys-109, and His-114. Cys-82 and Cys-115 are joined by a disulfide.

As to expression, strongly expressed in stigma and style and to a lesser extent in leaves, ovary and petals. Not detected in pollen tubes, mature anthers or roots.

In terms of biological role, diffusible chemotropic factor that induces pollen tube chemotropism. The polypeptide is Chemocyanin (Lilium longiflorum (Trumpet lily)).